Reading from the N-terminus, the 545-residue chain is Chaperonin GroEL (545 aa).

ATP-binding positions include 29 to 32, lysine 50, 86 to 90, glycine 413, 479 to 481, and aspartate 496; these read TLGP, DGTTT, and NAA. Residues 525 to 545 form a disordered region; sequence KPEKEKAPAAAGAPDMGGMDF. Residues 532–545 are compositionally biased toward low complexity; that stretch reads PAAAGAPDMGGMDF.

Belongs to the chaperonin (HSP60) family. In terms of assembly, forms a cylinder of 14 subunits composed of two heptameric rings stacked back-to-back. Interacts with the co-chaperonin GroES.

It is found in the cytoplasm. It carries out the reaction ATP + H2O + a folded polypeptide = ADP + phosphate + an unfolded polypeptide.. Together with its co-chaperonin GroES, plays an essential role in assisting protein folding. The GroEL-GroES system forms a nano-cage that allows encapsulation of the non-native substrate proteins and provides a physical environment optimized to promote and accelerate protein folding. The chain is Chaperonin GroEL from Deinococcus geothermalis (strain DSM 11300 / CIP 105573 / AG-3a).